A 522-amino-acid polypeptide reads, in one-letter code: Ankyrin repeat and death domain-containing protein 1A (522 aa).

ANK repeat units lie at residues 14 to 43, 47 to 76, 90 to 119, 123 to 152, 158 to 187, 191 to 220, 224 to 253, 257 to 286, 290 to 319, 323 to 352, and 356 to 385; these read PLERQLHEAARQNNVGRMQELIGRRVNTRA, VGRVALHWAAGAGHEQAVRLLLEHEAAVDE, FGMNALLLSAWFGHLRILQILVNSGAKIHC, DGLTLLHCAAQKGHVPVLAFIMEDLEDVAL, LGRTAFHRAAEHGQLDALDFLVGSGCDHNV, EGNTALHLAAGRGHMAVLQRLVDIGLDLEE, EGLTALHSAAGGSHPDCVQLLLRAGSTVNA, KNLSCLHYAALSGSEDVSRVLIHAGGCANV, QGASPLHLAVRHNFPALVRLLINSDSDVNA, RQQTPLHLAAEHAWQDIADMLLIAGVDLNL, and QGKTALAVAVRSNHVSLVDMIIKADRFYRW. The Death domain maps to 413 to 501; the sequence is SVLWRLASRY…DLAGWSTMAR (89 aa).

This Homo sapiens (Human) protein is Ankyrin repeat and death domain-containing protein 1A (ANKDD1A).